We begin with the raw amino-acid sequence, 809 residues long: Protein PHOX3 (809 aa).

The interval 1 to 22 (MEKQNEEISTDDAETSQSQLVD) is disordered. TPR repeat units follow at residues 126–159 (AQGL…LPKD), 164–199 (SHVR…TPDH), 200–233 (NKAL…DPKN), 235–265 (MASE…PPDY), and 274–311 (AALW…EKKN). The tract at residues 288 to 339 (TKKSNQVEEKSEGEGEDVEPEKKNNVLAEKGKEKIKMKVKGKQSDKRSDTSK) is disordered. A Phosphoserine modification is found at serine 298. Positions 307–339 (PEKKNNVLAEKGKEKIKMKVKGKQSDKRSDTSK) are enriched in basic and acidic residues. A PB1 domain is found at 359 to 438 (NKDVKFVYSD…GTMRFYVVEV (80 aa)). TPR repeat units follow at residues 508-541 (SEAM…SLLN), 563-597 (ESVS…KPEC), and 615-648 (SWYY…IKKS). Positions 656 to 686 (ETGKESEPSQAGKTDCLTHEKDLGSSTQNNP) are disordered. The stretch at 709–741 (SIMEYKLDQPFWRESLEAAMEKFELAGTCKDDV) is one TPR 9 repeat.

Carboxylate clamp type tetratricopeptide repeat protein that may act as a potential Hsp90/Hsp70 co-chaperone. Contributes to polar growth of root hairs. The protein is Protein PHOX3 of Arabidopsis thaliana (Mouse-ear cress).